Reading from the N-terminus, the 598-residue chain is Elongation factor 4 (598 aa).

A tr-type G domain is found at 4–181 (KKIRNFAIIA…AIVNLIPPPQ (178 aa)). GTP contacts are provided by residues 16–21 (DHGKST) and 128–131 (NKID).

The protein belongs to the TRAFAC class translation factor GTPase superfamily. Classic translation factor GTPase family. LepA subfamily.

Its subcellular location is the cell membrane. The enzyme catalyses GTP + H2O = GDP + phosphate + H(+). Its function is as follows. Required for accurate and efficient protein synthesis under certain stress conditions. May act as a fidelity factor of the translation reaction, by catalyzing a one-codon backward translocation of tRNAs on improperly translocated ribosomes. Back-translocation proceeds from a post-translocation (POST) complex to a pre-translocation (PRE) complex, thus giving elongation factor G a second chance to translocate the tRNAs correctly. Binds to ribosomes in a GTP-dependent manner. This Mesomycoplasma hyopneumoniae (strain J / ATCC 25934 / NCTC 10110) (Mycoplasma hyopneumoniae) protein is Elongation factor 4.